Consider the following 327-residue polypeptide: Microtubule-associated protein RP/EB family member 2 (327 aa).

A disordered region spans residues 1-21; that stretch reads MPGPTQTLSPNGENNNDIIQD. Pro-2 is subject to N-acetylalanine. A Phosphoserine modification is found at Ser-9. A Calponin-homology (CH) domain is found at 57–159; the sequence is TMSRHDIIAW…FIQWFKKFYD (103 aa). Position 167 is a phosphotyrosine (Tyr-167). Disordered regions lie at residues 171-240 and 299-327; these read EARQ…DKDL and ASEEHEGHTEEPEAEEQAHEQQPPQQEEY. A DCTN1-binding region spans residues 187-327; it reads QIFNLPKKSH…EQQPPQQEEY (141 aa). Residues 200-234 show a composition bias toward low complexity; the sequence is SPTAGAAKSSPAAKPGSTPSRPSSAKRASSSGSAS. Phosphoserine is present on residues Ser-219 and Ser-236. The region spanning 236-306 is the EB1 C-terminal domain; the sequence is SDKDLETQVI…LYASEEHEGH (71 aa). The interval 259–302 is APC-binding; sequence EGVEKERDFYFGKLREIELLCQEHGQENDDLVQRLMDILYASEE. Residues 300–317 are compositionally biased toward basic and acidic residues; sequence SEEHEGHTEEPEAEEQAH. Low complexity predominate over residues 318–327; sequence EQQPPQQEEY.

Belongs to the MAPRE family. As to quaternary structure, interacts with DCTN1. Interacts with APC (via C-terminal). Interacts with monomeric and polymerized tubulin. Interacts with SLAIN1. Interacts (via the N-terminal region) with BAG1. Interacts with ASB14. Interacts with HAX1; this interaction is essential for epidermal cell migration. In terms of processing, phosphorylated at Ser-236 by CK2 leading to enhanced cell adhesion. Phosphorylated by CDK1 and AURKB during mitosis reduces the binding affinity of MAPRE2 for microtubules. Post-translationally, ubiquitinated in an ASB14-dependent manner; leading to proteasomal degradation. As to expression, expressed in different tumor cell lines. Up-regulated in activated B- and T-lymphocytes.

The protein localises to the cytoplasm. It is found in the cytoskeleton. In terms of biological role, adapter protein that is involved in microtubule polymerization, and spindle function by stabilizing microtubules and anchoring them at centrosomes. Therefore, ensures mitotic progression and genome stability. Acts as a central regulator of microtubule reorganization in apico-basal epithelial differentiation. Plays a role during oocyte meiosis by regulating microtubule dynamics. Participates in neurite growth by interacting with plexin B3/PLXNB3 and microtubule reorganization during apico-basal epithelial differentiation. Also plays an essential role for cell migration and focal adhesion dynamics. Mechanistically, recruits HAX1 to microtubules in order to regulate focal adhesion dynamics. The sequence is that of Microtubule-associated protein RP/EB family member 2 (MAPRE2) from Homo sapiens (Human).